The sequence spans 159 residues: Ribosomal RNA large subunit methyltransferase H (159 aa).

Residues L76, G108, and 127–132 (FGRLTL) contribute to the S-adenosyl-L-methionine site.

Belongs to the RNA methyltransferase RlmH family. Homodimer.

The protein resides in the cytoplasm. The catalysed reaction is pseudouridine(1915) in 23S rRNA + S-adenosyl-L-methionine = N(3)-methylpseudouridine(1915) in 23S rRNA + S-adenosyl-L-homocysteine + H(+). Functionally, specifically methylates the pseudouridine at position 1915 (m3Psi1915) in 23S rRNA. This is Ribosomal RNA large subunit methyltransferase H from Listeria welshimeri serovar 6b (strain ATCC 35897 / DSM 20650 / CCUG 15529 / CIP 8149 / NCTC 11857 / SLCC 5334 / V8).